The following is a 634-amino-acid chain: UPF0329 protein ECU07_1850/ECU10_0050 (634 aa).

Basic and acidic residues-rich tracts occupy residues 354-365 (REEREKREESKG) and 397-407 (GESKEEDRGEE). The interval 354 to 438 (REEREKREES…KGSGEKRISE (85 aa)) is disordered. The segment covering 408–417 (GGVEAEDPLE) has biased composition (acidic residues).

Belongs to the UPF0329 family.

This chain is UPF0329 protein ECU07_1850/ECU10_0050, found in Encephalitozoon cuniculi (strain GB-M1) (Microsporidian parasite).